Here is a 364-residue protein sequence, read N- to C-terminus: Uroporphyrinogen decarboxylase (364 aa).

Residues 28–32 (RQAGR), Phe47, Asp78, Tyr158, Thr213, and His334 contribute to the substrate site.

It belongs to the uroporphyrinogen decarboxylase family. Homodimer.

The protein resides in the cytoplasm. The catalysed reaction is uroporphyrinogen III + 4 H(+) = coproporphyrinogen III + 4 CO2. The protein operates within porphyrin-containing compound metabolism; protoporphyrin-IX biosynthesis; coproporphyrinogen-III from 5-aminolevulinate: step 4/4. Its function is as follows. Catalyzes the decarboxylation of four acetate groups of uroporphyrinogen-III to yield coproporphyrinogen-III. The polypeptide is Uroporphyrinogen decarboxylase (Ralstonia nicotianae (strain ATCC BAA-1114 / GMI1000) (Ralstonia solanacearum)).